Reading from the N-terminus, the 954-residue chain is Glycine dehydrogenase (decarboxylating) (954 aa).

At lysine 704 the chain carries N6-(pyridoxal phosphate)lysine.

This sequence belongs to the GcvP family. The glycine cleavage system is composed of four proteins: P, T, L and H. It depends on pyridoxal 5'-phosphate as a cofactor.

It carries out the reaction N(6)-[(R)-lipoyl]-L-lysyl-[glycine-cleavage complex H protein] + glycine + H(+) = N(6)-[(R)-S(8)-aminomethyldihydrolipoyl]-L-lysyl-[glycine-cleavage complex H protein] + CO2. In terms of biological role, the glycine cleavage system catalyzes the degradation of glycine. The P protein binds the alpha-amino group of glycine through its pyridoxal phosphate cofactor; CO(2) is released and the remaining methylamine moiety is then transferred to the lipoamide cofactor of the H protein. The sequence is that of Glycine dehydrogenase (decarboxylating) from Agrobacterium fabrum (strain C58 / ATCC 33970) (Agrobacterium tumefaciens (strain C58)).